The chain runs to 301 residues: Beta carbonic anhydrase 5, chloroplastic (301 aa).

The N-terminal 56 residues, 1-56 (MAATPTHFSVSHDPFSSTSLLNLQTQAIFGPNHSLKTTQLRIPASFRRKATNLQVM), are a transit peptide targeting the chloroplast. A Phosphothreonine modification is found at T65. The residue at position 128 (S128) is a Phosphoserine. S-nitrosocysteine is present on C231.

Belongs to the beta-class carbonic anhydrase family. Strongly expressed in aerial tissues including leaves, stems, flowers and siliques.

The protein localises to the plastid. It is found in the chloroplast. It catalyses the reaction hydrogencarbonate + H(+) = CO2 + H2O. Its function is as follows. Reversible hydration of carbon dioxide. This chain is Beta carbonic anhydrase 5, chloroplastic (BCA5), found in Arabidopsis thaliana (Mouse-ear cress).